Consider the following 528-residue polypeptide: ATP synthase subunit beta 2 (528 aa).

Residues 1–10 (MADPQATNGT) are compositionally biased toward polar residues. The segment at 1 to 27 (MADPQATNGTGAACAERDASDVGDARD) is disordered. Basic and acidic residues predominate over residues 15–27 (AERDASDVGDARD). Residue 179-186 (GGAGVGKT) coordinates ATP. Residues 488–499 (AAAREADARREA) are compositionally biased toward basic and acidic residues. The interval 488 to 528 (AAAREADARREAAAAASGAGPGTTSDPASGSAEPQGARHGR) is disordered.

It belongs to the ATPase alpha/beta chains family. F-type ATPases have 2 components, CF(1) - the catalytic core - and CF(0) - the membrane proton channel. CF(1) has five subunits: alpha(3), beta(3), gamma(1), delta(1), epsilon(1). CF(0) has three main subunits: a(1), b(2) and c(9-12). The alpha and beta chains form an alternating ring which encloses part of the gamma chain. CF(1) is attached to CF(0) by a central stalk formed by the gamma and epsilon chains, while a peripheral stalk is formed by the delta and b chains.

The protein resides in the cell inner membrane. It catalyses the reaction ATP + H2O + 4 H(+)(in) = ADP + phosphate + 5 H(+)(out). In terms of biological role, produces ATP from ADP in the presence of a proton gradient across the membrane. The catalytic sites are hosted primarily by the beta subunits. The chain is ATP synthase subunit beta 2 from Burkholderia pseudomallei (strain 1106a).